We begin with the raw amino-acid sequence, 149 residues long: D-aminoacyl-tRNA deacylase (149 aa).

Residues 138–139 (GP) carry the Gly-cisPro motif, important for rejection of L-amino acids motif.

It belongs to the DTD family. In terms of assembly, homodimer.

The protein localises to the cytoplasm. It carries out the reaction glycyl-tRNA(Ala) + H2O = tRNA(Ala) + glycine + H(+). The catalysed reaction is a D-aminoacyl-tRNA + H2O = a tRNA + a D-alpha-amino acid + H(+). An aminoacyl-tRNA editing enzyme that deacylates mischarged D-aminoacyl-tRNAs. Also deacylates mischarged glycyl-tRNA(Ala), protecting cells against glycine mischarging by AlaRS. Acts via tRNA-based rather than protein-based catalysis; rejects L-amino acids rather than detecting D-amino acids in the active site. By recycling D-aminoacyl-tRNA to D-amino acids and free tRNA molecules, this enzyme counteracts the toxicity associated with the formation of D-aminoacyl-tRNA entities in vivo and helps enforce protein L-homochirality. The protein is D-aminoacyl-tRNA deacylase of Chlorobaculum parvum (strain DSM 263 / NCIMB 8327) (Chlorobium vibrioforme subsp. thiosulfatophilum).